The primary structure comprises 213 residues: EEF1A lysine methyltransferase 1 (213 aa).

Belongs to the class I-like SAM-binding methyltransferase superfamily. EFM5 family.

Its subcellular location is the cytoplasm. It carries out the reaction L-lysyl-[protein] + 3 S-adenosyl-L-methionine = N(6),N(6),N(6)-trimethyl-L-lysyl-[protein] + 3 S-adenosyl-L-homocysteine + 3 H(+). Its function is as follows. Protein-lysine methyltransferase that selectively catalyzes the trimethylation of EEF1A at 'Lys-79'. The polypeptide is EEF1A lysine methyltransferase 1 (Gallus gallus (Chicken)).